The chain runs to 380 residues: Elongation factor Ts, mitochondrial (380 aa).

The protein belongs to the EF-Ts family.

Its subcellular location is the mitochondrion. Associates with the EF-Tu.GDP complex and induces the exchange of GDP to GTP. It remains bound to the aminoacyl-tRNA.EF-Tu.GTP complex up to the GTP hydrolysis stage on the ribosome. The protein is Elongation factor Ts, mitochondrial of Plasmodium chabaudi chabaudi.